A 764-amino-acid chain; its full sequence is 5-methyltetrahydropteroyltriglutamate--homocysteine methyltransferase (764 aa).

5-methyltetrahydropteroyltri-L-glutamate is bound by residues 16 to 19 (RELK) and Lys121. Residues 440 to 442 (IGS) and Glu493 contribute to the L-homocysteine site. Residues 440-442 (IGS) and Glu493 contribute to the L-methionine site. 5-methyltetrahydropteroyltri-L-glutamate contacts are provided by residues 524 to 525 (RC) and Trp570. Asp608 contacts L-homocysteine. Asp608 provides a ligand contact to L-methionine. Position 614 (Glu614) interacts with 5-methyltetrahydropteroyltri-L-glutamate. 3 residues coordinate Zn(2+): His650, Cys652, and Glu674. Residue His703 is the Proton donor of the active site. Cys735 provides a ligand contact to Zn(2+).

It belongs to the vitamin-B12 independent methionine synthase family. It depends on Zn(2+) as a cofactor.

The catalysed reaction is 5-methyltetrahydropteroyltri-L-glutamate + L-homocysteine = tetrahydropteroyltri-L-glutamate + L-methionine. Its pathway is amino-acid biosynthesis; L-methionine biosynthesis via de novo pathway; L-methionine from L-homocysteine (MetE route): step 1/1. Its function is as follows. Catalyzes the transfer of a methyl group from 5-methyltetrahydrofolate to homocysteine resulting in methionine formation. The chain is 5-methyltetrahydropteroyltriglutamate--homocysteine methyltransferase from Burkholderia cenocepacia (strain ATCC BAA-245 / DSM 16553 / LMG 16656 / NCTC 13227 / J2315 / CF5610) (Burkholderia cepacia (strain J2315)).